We begin with the raw amino-acid sequence, 972 residues long: Microtubule-associated protein 1S (972 aa).

A necessary for the microtubule-organizing center localization region spans residues 1–715 (MAAVMAAPEP…SESLPTLSDS (715 aa)). Positions 454–469 (LEVPSRANSQDSLASR) are enriched in polar residues. A disordered region spans residues 454–632 (LEVPSRANSQ…PHSTEVDESL (179 aa)). Phosphoserine is present on Ser462. Residues 489–505 (VRREPALATRDQKKDTK) show a composition bias toward basic and acidic residues. Pro residues-rich tracts occupy residues 537-550 (APVP…PAPE) and 564-581 (PPAP…PPTA). Phosphoserine occurs at positions 585, 590, and 592. The necessary for interaction with RASSF1 stretch occupies residues 600 to 972 (PDASPSATTP…EAFPACKVEF (373 aa)). The segment covering 602 to 620 (ASPSATTPTLTTPSLPAEL) has biased composition (low complexity). Residues 644 to 879 (DAGLSLPLRL…GGGAGHLDQN (236 aa)) are necessary for association with microtubules. Phosphoserine occurs at positions 659 and 683. Residues 671-854 (CEFSHRKPPP…SSGPSSRPAP (184 aa)) form a disordered region. Over residues 702 to 721 (PTSVSESLPTLSDSDPVPVA) the composition is skewed to low complexity. The residue at position 723 (Ser723) is a Phosphoserine. Pro residues predominate over residues 737–748 (LPTPRVPPPLPD). Over residues 781-800 (ARPSSASAAPRAATVAAKTK) the composition is skewed to low complexity. The necessary for association with actin stretch occupies residues 874 to 972 (GHLDQNFFLR…EAFPACKVEF (99 aa)). The interval 880-904 (FFLRVRALCYVISGQGQRQEEGLRG) is necessary for the mitochondrial aggregation and genome destruction.

Belongs to the MAP1A/MAP1B/MAP1S family. In terms of assembly, heterodimer of a heavy and a light chain. Interacts with microtubules and actin. Both MAP1S heavy and light chains interact with microtubules. MAP1S light chain interacts with actin. Interacts with LRPPRC, RASSF1, microtubules and VCY2. Interacts (via C-terminus) with GAN (via Kelch domains). Interacts with WDR47 (via N-terminus of light chain). Interacts with ESR1. Expressed in cortex cerebellum, dorsal root ganglia, frontal cortex, hippocampus, hypothalamus, mesencephalon, medulla oblongata, occipital cortex, pons, spinal cord, striatum of the brain, neurons, heart, testis and skeletal muscle (at protein level).

The protein resides in the nucleus. The protein localises to the cytoplasm. It localises to the cytosol. Its subcellular location is the cytoskeleton. It is found in the spindle. Microtubule-associated protein that mediates aggregation of mitochondria resulting in cell death and genomic destruction (MAGD). Plays a role in anchoring the microtubule organizing center to the centrosomes. Binds to DNA. Plays a role in apoptosis. Involved in the formation of microtubule bundles. The sequence is that of Microtubule-associated protein 1S (Map1s) from Rattus norvegicus (Rat).